A 60-amino-acid chain; its full sequence is Sperm protamine P1 (60 aa).

The disordered stretch occupies residues 1 to 60 (MARYRHSRSRSRSRYRRRRRRRSRYRSRRRRXRRRRRSRRGRRRRGYSRRRYSRRRRRRY).

Belongs to the protamine P1 family. As to expression, testis.

The protein resides in the nucleus. Its subcellular location is the chromosome. Its function is as follows. Protamines substitute for histones in the chromatin of sperm during the haploid phase of spermatogenesis. They compact sperm DNA into a highly condensed, stable and inactive complex. The protein is Sperm protamine P1 (PRM1) of Petrogale concinna (Nabarlek).